We begin with the raw amino-acid sequence, 1214 residues long: ATP-dependent helicase/nuclease subunit A (1214 aa).

In terms of domain architecture, UvrD-like helicase ATP-binding spans 27-483; it reads HKRTAQQIEA…ILLKENFRSQ (457 aa). 48–55 contributes to the ATP binding site; that stretch reads ASAGSGKT. The 289-residue stretch at 512-800 folds into the UvrD-like helicase C-terminal domain; the sequence is QLVAGSEAQK…NLMTIHKSKG (289 aa).

The protein belongs to the helicase family. AddA subfamily. In terms of assembly, heterodimer of AddA and AddB/RexB. It depends on Mg(2+) as a cofactor.

The catalysed reaction is Couples ATP hydrolysis with the unwinding of duplex DNA by translocating in the 3'-5' direction.. It catalyses the reaction ATP + H2O = ADP + phosphate + H(+). Functionally, the heterodimer acts as both an ATP-dependent DNA helicase and an ATP-dependent, dual-direction single-stranded exonuclease. Recognizes the chi site generating a DNA molecule suitable for the initiation of homologous recombination. The AddA nuclease domain is required for chi fragment generation; this subunit has the helicase and 3' -&gt; 5' nuclease activities. The polypeptide is ATP-dependent helicase/nuclease subunit A (Streptococcus equi subsp. zooepidemicus (strain MGCS10565)).